Reading from the N-terminus, the 1467-residue chain is Neuropathy target esterase sws (1467 aa).

Residues 1 to 34 (MDVLEMLRASASGSYNTIFSDAWCQYVSKQITAT) are Lumenal-facing. A helical transmembrane segment spans residues 35–55 (MYMYCAFGLMGVLFLAWFMYF). Residues 56-1467 (KRLARLRLRD…RSSTYNETKN (1412 aa)) are Cytoplasmic-facing. A nucleoside 3',5'-cyclic phosphate is bound at residue 174-301 (IFGHFEKPIF…IRVIQVIMIR (128 aa)). 2 disordered regions span residues 332–353 (TMSG…ANGP) and 372–416 (MGMG…SVHG). Residues 339 to 350 (SQTSQSSRQATA) are compositionally biased toward low complexity. S450 and S459 each carry phosphoserine. A nucleoside 3',5'-cyclic phosphate is bound by residues 488 to 615 (ELGL…VVRR) and 604 to 731 (IVLD…LSHR). A PNPLA domain is found at 958–1124 (LVLGGGGARG…VNNLPGHLWR (167 aa)). The short motif at 962 to 967 (GGGARG) is the GXGXXG element. Positions 989-993 (GVSIG) match the GXSXG motif. S991 functions as the Nucleophile in the catalytic mechanism. The Proton acceptor role is filled by D1111. The DGA/G motif lies at 1111 to 1113 (DGG). S1205 is subject to Phosphoserine. The disordered stretch occupies residues 1377-1467 (RKMDKSTQST…RSSTYNETKN (91 aa)). Residues 1382–1393 (STQSTPPTSSRA) show a composition bias toward polar residues. 2 stretches are compositionally biased toward basic and acidic residues: residues 1396–1406 (RGKEEARHMDN) and 1448–1458 (LADKDEDKENR).

This sequence belongs to the NTE family. In terms of assembly, interacts with Pka-C3; interaction inhibits the catalytic function of Pka-C3 and the esterase activity of sws.

It localises to the endoplasmic reticulum membrane. The enzyme catalyses a 1-acyl-sn-glycero-3-phosphocholine + H2O = sn-glycerol 3-phosphocholine + a fatty acid + H(+). In terms of biological role, phospholipase B that deacylates intracellular phosphatidylcholine (PtdCho), generating glycerophosphocholine (GroPtdCho). This deacylation occurs at both sn-2 and sn-1 positions of PtdCho. Its specific chemical modification by certain organophosphorus (OP) compounds leads to distal axonopathy. Plays a role in the signaling mechanism between neurons and glia that regulates glia wrapping during development of the adult brain. Essential for membrane lipid homeostasis and cell survival in both neurons and glia of the adult brain. The sequence is that of Neuropathy target esterase sws from Drosophila yakuba (Fruit fly).